The primary structure comprises 279 residues: Putative biopolymer transport protein ExbB homolog (279 aa).

3 helical membrane-spanning segments follow: residues 19 to 39, 126 to 146, and 162 to 182; these read SGGVITYLIAAIGIYGFITAL, IIEVAPMLGLIGTVIGIWYTF, and IYVALITTILGLAVAIILMPL.

Belongs to the ExbB/TolQ family.

Its subcellular location is the cell membrane. In Methanothermobacter thermautotrophicus (strain ATCC 29096 / DSM 1053 / JCM 10044 / NBRC 100330 / Delta H) (Methanobacterium thermoautotrophicum), this protein is Putative biopolymer transport protein ExbB homolog.